The chain runs to 122 residues: Large ribosomal subunit protein uL14 (122 aa).

Belongs to the universal ribosomal protein uL14 family. In terms of assembly, part of the 50S ribosomal subunit. Forms a cluster with proteins L3 and L19. In the 70S ribosome, L14 and L19 interact and together make contacts with the 16S rRNA in bridges B5 and B8.

In terms of biological role, binds to 23S rRNA. Forms part of two intersubunit bridges in the 70S ribosome. The protein is Large ribosomal subunit protein uL14 of Francisella philomiragia subsp. philomiragia (strain ATCC 25017 / CCUG 19701 / FSC 153 / O#319-036).